Here is a 546-residue protein sequence, read N- to C-terminus: Probable protein kinase UbiB (546 aa).

In terms of domain architecture, Protein kinase spans 124–502; it reads DFDITPLASA…RVKQGQSRYL (379 aa). ATP is bound by residues 130–138 and Lys-153; that span reads LASASIAQV. The Proton acceptor role is filled by Asp-288. A run of 2 helical transmembrane segments spans residues 501–518 and 523–542; these read YLFGIGATLMLSSTLLFI and WGMSPGWLMAGGILVWLIGW.

Belongs to the ABC1 family. UbiB subfamily.

The protein localises to the cell inner membrane. It functions in the pathway cofactor biosynthesis; ubiquinone biosynthesis [regulation]. In terms of biological role, is probably a protein kinase regulator of UbiI activity which is involved in aerobic coenzyme Q (ubiquinone) biosynthesis. This chain is Probable protein kinase UbiB, found in Cronobacter sakazakii (strain ATCC BAA-894) (Enterobacter sakazakii).